A 39-amino-acid chain; its full sequence is MTTEKIYPIFTVRWLAVHGLAVPTVFFLGSISAMQFIQR.

A helical transmembrane segment spans residues 14 to 30; it reads WLAVHGLAVPTVFFLGS. Heme is bound at residue H18.

The protein belongs to the PsbE/PsbF family. In terms of assembly, heterodimer of an alpha subunit and a beta subunit. PSII is composed of 1 copy each of membrane proteins PsbA, PsbB, PsbC, PsbD, PsbE, PsbF, PsbH, PsbI, PsbJ, PsbK, PsbL, PsbM, PsbT, PsbX, PsbY, PsbZ, Psb30/Ycf12, at least 3 peripheral proteins of the oxygen-evolving complex and a large number of cofactors. It forms dimeric complexes. Heme b serves as cofactor.

The protein resides in the plastid. It localises to the chloroplast thylakoid membrane. Its function is as follows. This b-type cytochrome is tightly associated with the reaction center of photosystem II (PSII). PSII is a light-driven water:plastoquinone oxidoreductase that uses light energy to abstract electrons from H(2)O, generating O(2) and a proton gradient subsequently used for ATP formation. It consists of a core antenna complex that captures photons, and an electron transfer chain that converts photonic excitation into a charge separation. This Gnetum gnemon (Spanish joint-fir) protein is Cytochrome b559 subunit beta.